A 211-amino-acid polypeptide reads, in one-letter code: ATP phosphoribosyltransferase (211 aa).

It belongs to the ATP phosphoribosyltransferase family. Short subfamily. In terms of assembly, heteromultimer composed of HisG and HisZ subunits.

It is found in the cytoplasm. The catalysed reaction is 1-(5-phospho-beta-D-ribosyl)-ATP + diphosphate = 5-phospho-alpha-D-ribose 1-diphosphate + ATP. Its pathway is amino-acid biosynthesis; L-histidine biosynthesis; L-histidine from 5-phospho-alpha-D-ribose 1-diphosphate: step 1/9. Functionally, catalyzes the condensation of ATP and 5-phosphoribose 1-diphosphate to form N'-(5'-phosphoribosyl)-ATP (PR-ATP). Has a crucial role in the pathway because the rate of histidine biosynthesis seems to be controlled primarily by regulation of HisG enzymatic activity. The sequence is that of ATP phosphoribosyltransferase from Pseudomonas putida (strain GB-1).